The primary structure comprises 476 residues: UDP-N-acetylmuramate--L-alanine ligase (476 aa).

ATP is bound at residue 107-113 (GTHGKTT).

It belongs to the MurCDEF family.

It localises to the cytoplasm. It carries out the reaction UDP-N-acetyl-alpha-D-muramate + L-alanine + ATP = UDP-N-acetyl-alpha-D-muramoyl-L-alanine + ADP + phosphate + H(+). It participates in cell wall biogenesis; peptidoglycan biosynthesis. Functionally, cell wall formation. This Roseiflexus castenholzii (strain DSM 13941 / HLO8) protein is UDP-N-acetylmuramate--L-alanine ligase.